The following is a 673-amino-acid chain: Glycine--tRNA ligase beta subunit (673 aa).

The protein belongs to the class-II aminoacyl-tRNA synthetase family. Tetramer of two alpha and two beta subunits.

Its subcellular location is the cytoplasm. The enzyme catalyses tRNA(Gly) + glycine + ATP = glycyl-tRNA(Gly) + AMP + diphosphate. This is Glycine--tRNA ligase beta subunit from Lactococcus lactis subsp. lactis (strain IL1403) (Streptococcus lactis).